A 630-amino-acid chain; its full sequence is ATP-dependent zinc metalloprotease FtsH 2 (630 aa).

Residues 1 to 8 (MNNNPNRR) lie on the Cytoplasmic side of the membrane. Residues 9 to 29 (GSLIGPLFIYFILAMLIFMSI) form a helical membrane-spanning segment. Topologically, residues 30 to 110 (SQLNTSNITE…YIQNTGASWW (81 aa)) are periplasmic. A helical transmembrane segment spans residues 111–131 (VTMLIYMLPLIILMFFWFWMF). Residues 132 to 630 (RRSGTGEGIP…KETNLFVSYA (499 aa)) are Cytoplasmic-facing. 203–210 (GPPGTGKT) is an ATP binding site. Zn(2+) is bound at residue histidine 425. Residue glutamate 426 is part of the active site. Zn(2+) is bound by residues histidine 429 and aspartate 502.

It in the central section; belongs to the AAA ATPase family. In the C-terminal section; belongs to the peptidase M41 family. Homohexamer. Zn(2+) is required as a cofactor.

The protein resides in the cell inner membrane. Functionally, acts as a processive, ATP-dependent zinc metallopeptidase for both cytoplasmic and membrane proteins. Plays a role in the quality control of integral membrane proteins. This chain is ATP-dependent zinc metalloprotease FtsH 2, found in Petrotoga mobilis (strain DSM 10674 / SJ95).